A 356-amino-acid polypeptide reads, in one-letter code: sn-glycerol-3-phosphate import ATP-binding protein UgpC (356 aa).

An ABC transporter domain is found at L4–I235. Residue G37–S44 participates in ATP binding.

It belongs to the ABC transporter superfamily. sn-glycerol-3-phosphate importer (TC 3.A.1.1.3) family. In terms of assembly, the complex is composed of two ATP-binding proteins (UgpC), two transmembrane proteins (UgpA and UgpE) and a solute-binding protein (UgpB).

The protein resides in the cell inner membrane. The enzyme catalyses sn-glycerol 3-phosphate(out) + ATP + H2O = sn-glycerol 3-phosphate(in) + ADP + phosphate + H(+). Functionally, part of the ABC transporter complex UgpBAEC involved in sn-glycerol-3-phosphate (G3P) import. Responsible for energy coupling to the transport system. The sequence is that of sn-glycerol-3-phosphate import ATP-binding protein UgpC from Salmonella paratyphi A (strain ATCC 9150 / SARB42).